A 263-amino-acid chain; its full sequence is Uridylate kinase (263 aa).

29–32 (KVSG) is an ATP binding site. UMP is bound at residue G71. ATP-binding residues include G72 and R76. Residues D91 and 152–159 (TGNPFFTT) each bind UMP. 4 residues coordinate ATP: T179, Q180, Y185, and D188.

Belongs to the UMP kinase family. In terms of assembly, homohexamer.

It localises to the cytoplasm. It catalyses the reaction UMP + ATP = UDP + ADP. It participates in pyrimidine metabolism; CTP biosynthesis via de novo pathway; UDP from UMP (UMPK route): step 1/1. Inhibited by UTP. Functionally, catalyzes the reversible phosphorylation of UMP to UDP. The chain is Uridylate kinase from Maricaulis maris (strain MCS10) (Caulobacter maris).